The sequence spans 290 residues: MVRNLKIAIPNKGRLQQPTLQFLQSVGIKPLASDDRALIVPTSWEGVQLVMIRTEDIPNIVETGATELGITGHDYVIESSADVEELIKLDFGRSKIVLAVPQTWRENSVDELKGKEFRVATKYYNIAKEYVRRRELNAKVVKISGAAEVMPSLGAAEAIIDVMSTGTTLKLHGLKAIDVIMDSYAVVIGNRNWIKNDEADRINLLLTMMKGAIAAKGKKMIFMNVPDNKLDGVINSLPAMLAPAITRLSRSDIWEVITVAEEDILPEVIAKVKAAGARDIVVIDIEKVVK.

The protein belongs to the ATP phosphoribosyltransferase family. Long subfamily. The cofactor is Mg(2+).

The protein localises to the cytoplasm. It carries out the reaction 1-(5-phospho-beta-D-ribosyl)-ATP + diphosphate = 5-phospho-alpha-D-ribose 1-diphosphate + ATP. It functions in the pathway amino-acid biosynthesis; L-histidine biosynthesis; L-histidine from 5-phospho-alpha-D-ribose 1-diphosphate: step 1/9. Its activity is regulated as follows. Feedback inhibited by histidine. Its function is as follows. Catalyzes the condensation of ATP and 5-phosphoribose 1-diphosphate to form N'-(5'-phosphoribosyl)-ATP (PR-ATP). Has a crucial role in the pathway because the rate of histidine biosynthesis seems to be controlled primarily by regulation of HisG enzymatic activity. The polypeptide is ATP phosphoribosyltransferase (hisG) (Saccharolobus solfataricus (strain ATCC 35092 / DSM 1617 / JCM 11322 / P2) (Sulfolobus solfataricus)).